The chain runs to 161 residues: Cyclic pyranopterin monophosphate synthase (161 aa).

Substrate is bound by residues Leu75–His77 and Met113–Glu114. Asp128 is a catalytic residue.

The protein belongs to the MoaC family. As to quaternary structure, homohexamer; trimer of dimers.

It catalyses the reaction (8S)-3',8-cyclo-7,8-dihydroguanosine 5'-triphosphate = cyclic pyranopterin phosphate + diphosphate. It functions in the pathway cofactor biosynthesis; molybdopterin biosynthesis. Its function is as follows. Catalyzes the conversion of (8S)-3',8-cyclo-7,8-dihydroguanosine 5'-triphosphate to cyclic pyranopterin monophosphate (cPMP). The chain is Cyclic pyranopterin monophosphate synthase from Salmonella dublin (strain CT_02021853).